Here is a 513-residue protein sequence, read N- to C-terminus: Probable histone deacetylase 19 (513 aa).

The histone deacetylase stretch occupies residues 23 to 334 (RRVCYFYDPD…WCYETGVALG (312 aa)). H154 functions as the Proton donor/acceptor in the catalytic mechanism. D189, H191, and D277 together coordinate Zn(2+). 2 disordered regions span residues 384–432 (HAPS…ESSR) and 446–513 (ENAT…YHKP). A compositionally biased stretch (acidic residues) spans 398–409 (EIPEQDEDQDDP). Residues 410–432 (DERHDPDSDMEVDDHKAVEESSR) show a composition bias toward basic and acidic residues. A compositionally biased stretch (polar residues) spans 492-504 (NVKNEPESSTKLQ).

Belongs to the histone deacetylase family. HD type 1 subfamily. The cofactor is Zn(2+).

The protein localises to the nucleus. The catalysed reaction is N(6)-acetyl-L-lysyl-[histone] + H2O = L-lysyl-[histone] + acetate. Functionally, responsible for the deacetylation of lysine residues on the N-terminal part of the core histones (H2A, H2B, H3 and H4). Histone deacetylation gives a tag for epigenetic repression and plays an important role in transcriptional regulation, cell cycle progression and developmental events. Histone deacetylases act via the formation of large multiprotein complexes. This Zea mays (Maize) protein is Probable histone deacetylase 19.